The chain runs to 309 residues: ADP-L-glycero-D-manno-heptose-6-epimerase (309 aa).

NADP(+) is bound by residues 10–11, 31–32, Lys38, Lys53, 75–79, and Asn92; these read MI, DN, and EGACS. Residue Tyr139 is the Proton acceptor of the active site. NADP(+) is bound at residue Lys143. Asn168 contacts substrate. Residues Val169 and Lys177 each contribute to the NADP(+) site. Lys177 serves as the catalytic Proton acceptor. Residues Ser179, His186, 200 to 203, Arg208, and Tyr271 each bind substrate; that span reads FDGS.

This sequence belongs to the NAD(P)-dependent epimerase/dehydratase family. HldD subfamily. Homopentamer. NADP(+) is required as a cofactor.

It catalyses the reaction ADP-D-glycero-beta-D-manno-heptose = ADP-L-glycero-beta-D-manno-heptose. It functions in the pathway nucleotide-sugar biosynthesis; ADP-L-glycero-beta-D-manno-heptose biosynthesis; ADP-L-glycero-beta-D-manno-heptose from D-glycero-beta-D-manno-heptose 7-phosphate: step 4/4. Its function is as follows. Catalyzes the interconversion between ADP-D-glycero-beta-D-manno-heptose and ADP-L-glycero-beta-D-manno-heptose via an epimerization at carbon 6 of the heptose. This Serratia proteamaculans (strain 568) protein is ADP-L-glycero-D-manno-heptose-6-epimerase.